The chain runs to 150 residues: Lipoprotein signal peptidase (150 aa).

2 helical membrane-spanning segments follow: residues 59 to 79 (VFVG…RYLP) and 84 to 101 (LLRL…GNLI). Residues D111 and D125 contribute to the active site. A helical transmembrane segment spans residues 117-137 (IWPVFNLADMAIVFGVIILCW).

It belongs to the peptidase A8 family.

Its subcellular location is the cell membrane. The catalysed reaction is Release of signal peptides from bacterial membrane prolipoproteins. Hydrolyzes -Xaa-Yaa-Zaa-|-(S,diacylglyceryl)Cys-, in which Xaa is hydrophobic (preferably Leu), and Yaa (Ala or Ser) and Zaa (Gly or Ala) have small, neutral side chains.. It participates in protein modification; lipoprotein biosynthesis (signal peptide cleavage). In terms of biological role, this protein specifically catalyzes the removal of signal peptides from prolipoproteins. The polypeptide is Lipoprotein signal peptidase (Moorella thermoacetica (strain ATCC 39073 / JCM 9320)).